Reading from the N-terminus, the 418-residue chain is Tektin-1 (418 aa).

Coiled-coil stretches lie at residues 20–107, 134–177, 266–308, and 332–383; these read NKSQ…SYKE, QELQ…DLKD, NGLK…QQEG, and VAQY…ENTI.

The protein belongs to the tektin family. As to quaternary structure, microtubule inner protein component of sperm flagellar doublet microtubules. Post-translationally, ubiquitinated, leading to its degradation. Deubiquitinated by USP16, promoting its stability. Predominantly expressed in testis.

It localises to the cytoplasm. It is found in the cytoskeleton. The protein resides in the cilium axoneme. Its subcellular location is the flagellum axoneme. Its function is as follows. Microtubule inner protein (MIP) part of the dynein-decorated doublet microtubules (DMTs) in cilia and flagellar axoneme. Forms filamentous polymers in the walls of ciliary and flagellar microtubules. The polypeptide is Tektin-1 (Tekt1) (Rattus norvegicus (Rat)).